A 657-amino-acid polypeptide reads, in one-letter code: Glycogen debranching enzyme (657 aa).

The Nucleophile role is filled by Asp336. Residue Glu371 is the Proton donor of the active site. The interval 460 to 479 (ANGEENRDGTNNNYSNNHGK) is disordered.

It belongs to the glycosyl hydrolase 13 family.

The enzyme catalyses Hydrolysis of (1-&gt;6)-alpha-D-glucosidic linkages to branches with degrees of polymerization of three or four glucose residues in limit dextrin.. Its pathway is glycan degradation; glycogen degradation. In terms of biological role, removes maltotriose and maltotetraose chains that are attached by 1,6-alpha-linkage to the limit dextrin main chain, generating a debranched limit dextrin. In Escherichia coli O81 (strain ED1a), this protein is Glycogen debranching enzyme.